Here is a 363-residue protein sequence, read N- to C-terminus: Type 3 secretion system translocon protein SctB (363 aa).

The segment covering 1 to 16 has biased composition (polar residues); sequence MEIQNTKPTQTLYTDI. Residues 1-30 are disordered; the sequence is MEIQNTKPTQTLYTDISTKQTQSSSETQKS. Low complexity predominate over residues 17-30; that stretch reads STKQTQSSSETQKS. The tract at residues 33 to 73 is ipgC chaperone binding domain; it reads YQQIAAHIPLNVGKNPVLTTTLNDDQLLKLSEQVQHDSEII. A helical membrane pass occupies residues 99 to 120; it reads ISSLSSNAVSLIISVAVLLSAL.

This sequence belongs to the SctB/SipC family. As to quaternary structure, the core secretion machinery of the T3SS is composed of approximately 20 different proteins, including cytoplasmic components, a base, an export apparatus and a needle. This subunit is involved in the formation of a pore, called the translocon, in host membrane. Interacts with IpaB/SctE. Interacts with the molecular chaperone IpgC, which prevents premature association with IpaB/SctE within the cytoplasm of Shigella cells. Does not interact with CDC42 or RAC1 GTPases in vitro.

It is found in the secreted. The protein localises to the host membrane. With respect to regulation, interaction with the membrane is affected by the pH. Component of the type III secretion system (T3SS), also called injectisome, which is used to inject bacterial effector proteins into eukaryotic host cells. IpaB/SctE and IpaC/SctB are inserted into the host membrane where they form a pore and allow the translocation of effector proteins into the cytosol of target cells. Induction and secretion of IpaC/SctB comprise the final step in triggering the induction of full type III secretion. Functionally, required for efficient dissemination. Necessary for lysis of the two cellular membranes that surround bacteria in protrusions during cell-to-cell spread. Contribute to actin nucleation in vitro, which may be a necessary step in Shigella invasion. This chain is Type 3 secretion system translocon protein SctB, found in Shigella flexneri.